We begin with the raw amino-acid sequence, 253 residues long: MLTRRLVVCLDVKGGRVVKGVQFEGLRDVGDPVELARRYEAEGADELTFLDISASAEERDTLWELVRRTAEQLFIPLAVGGGVRTVDDVGRALRAGADKVSINSAAVANPALLTACAERFGAQCVVASIDAKRDGDRWRVYTHGGRKPTDLDAVAWARECVARGAGEVLLTSIDRDGARTGYDLALTRAVSEAVDVPVIASGGAGSAAHVRAAFQEGGADAALVAGILHDGVTTVGAIKALLRESGLHIRSLT.

Active-site residues include Asp-11 and Asp-130.

Belongs to the HisA/HisF family. In terms of assembly, heterodimer of HisH and HisF.

It is found in the cytoplasm. It carries out the reaction 5-[(5-phospho-1-deoxy-D-ribulos-1-ylimino)methylamino]-1-(5-phospho-beta-D-ribosyl)imidazole-4-carboxamide + L-glutamine = D-erythro-1-(imidazol-4-yl)glycerol 3-phosphate + 5-amino-1-(5-phospho-beta-D-ribosyl)imidazole-4-carboxamide + L-glutamate + H(+). It participates in amino-acid biosynthesis; L-histidine biosynthesis; L-histidine from 5-phospho-alpha-D-ribose 1-diphosphate: step 5/9. Its function is as follows. IGPS catalyzes the conversion of PRFAR and glutamine to IGP, AICAR and glutamate. The HisF subunit catalyzes the cyclization activity that produces IGP and AICAR from PRFAR using the ammonia provided by the HisH subunit. This is Imidazole glycerol phosphate synthase subunit HisF from Myxococcus xanthus (strain DK1622).